Reading from the N-terminus, the 56-residue chain is Large ribosomal subunit protein bL33A (56 aa).

It belongs to the bacterial ribosomal protein bL33 family.

The chain is Large ribosomal subunit protein bL33A from Nocardia farcinica (strain IFM 10152).